We begin with the raw amino-acid sequence, 195 residues long: Putative archaetidylserine decarboxylase proenzyme (195 aa).

Ser159 serves as the catalytic Schiff-base intermediate with substrate; via pyruvic acid. The residue at position 159 (Ser159) is a Pyruvic acid (Ser); by autocatalysis.

This sequence belongs to the phosphatidylserine decarboxylase family. PSD-A subfamily. In terms of assembly, heterodimer of a large membrane-associated beta subunit and a small pyruvoyl-containing alpha subunit. It depends on pyruvate as a cofactor. Post-translationally, is synthesized initially as an inactive proenzyme. Formation of the active enzyme involves a self-maturation process in which the active site pyruvoyl group is generated from an internal serine residue via an autocatalytic post-translational modification. Two non-identical subunits are generated from the proenzyme in this reaction, and the pyruvate is formed at the N-terminus of the alpha chain, which is derived from the carboxyl end of the proenzyme. The autoendoproteolytic cleavage occurs by a canonical serine protease mechanism, in which the side chain hydroxyl group of the serine supplies its oxygen atom to form the C-terminus of the beta chain, while the remainder of the serine residue undergoes an oxidative deamination to produce ammonia and the pyruvoyl prosthetic group on the alpha chain. During this reaction, the Ser that is part of the protease active site of the proenzyme becomes the pyruvoyl prosthetic group, which constitutes an essential element of the active site of the mature decarboxylase. Is synthesized initially as an inactive proenzyme. Formation of the active enzyme involves a self-maturation process in which the active site pyruvoyl group is generated from an internal serine residue via an autocatalytic post-translational modification. Two non-identical subunits are generated from the proenzyme in this reaction, and the pyruvate is formed at the N-terminus of the alpha chain, which is derived from the carboxyl end of the proenzyme. The post-translation cleavage follows an unusual pathway, termed non-hydrolytic serinolysis, in which the side chain hydroxyl group of the serine supplies its oxygen atom to form the C-terminus of the beta chain, while the remainder of the serine residue undergoes an oxidative deamination to produce ammonia and the pyruvoyl prosthetic group on the alpha chain.

Its subcellular location is the cell membrane. It carries out the reaction archaetidylserine + H(+) = archaetidylethanolamine + CO2. In terms of biological role, catalyzes the formation of archaetidylethanolamine (PtdEtn) from archaetidylserine (PtdSer). This is Putative archaetidylserine decarboxylase proenzyme from Archaeoglobus fulgidus (strain ATCC 49558 / DSM 4304 / JCM 9628 / NBRC 100126 / VC-16).